Here is a 75-residue protein sequence, read N- to C-terminus: Small ribosomal subunit protein bS18 (75 aa).

This sequence belongs to the bacterial ribosomal protein bS18 family. Part of the 30S ribosomal subunit. Forms a tight heterodimer with protein bS6.

In terms of biological role, binds as a heterodimer with protein bS6 to the central domain of the 16S rRNA, where it helps stabilize the platform of the 30S subunit. The sequence is that of Small ribosomal subunit protein bS18 from Anaplasma marginale (strain St. Maries).